Consider the following 611-residue polypeptide: Leukotriene A-4 hydrolase (611 aa).

Position 73 is an N6-acetyllysine (lysine 73). A peptide is bound by residues 135-137 (QCQ) and 267-272 (PYGGME). Histidine 296 contacts Zn(2+). The Proton acceptor role is filled by glutamate 297. Residues histidine 300 and glutamate 319 each contribute to the Zn(2+) site. Lysine 337 bears the N6-acetyllysine mark. Tyrosine 384 acts as the Proton donor in catalysis. Serine 416 bears the Phosphoserine mark. 564-566 (RMK) contributes to the a peptide binding site. Lysine 573 bears the N6-acetyllysine mark.

The protein belongs to the peptidase M1 family. It depends on Zn(2+) as a cofactor. In terms of processing, phosphorylation at Ser-416 inhibits enzymatic activity.

The protein localises to the cytoplasm. It catalyses the reaction leukotriene A4 + H2O = leukotriene B4. It participates in lipid metabolism; leukotriene B4 biosynthesis. With respect to regulation, inhibited by bestatin. Subject to suicide inhibition by leukotriene A4. Its function is as follows. Epoxide hydrolase that catalyzes the final step in the biosynthesis of the pro-inflammatory mediator leukotriene B4. Also has aminopeptidase activity. The sequence is that of Leukotriene A-4 hydrolase (LTA4H) from Chinchilla lanigera (Long-tailed chinchilla).